The following is a 498-amino-acid chain: Oligopeptide transport system permease protein AmiC (498 aa).

The next 6 membrane-spanning stretches (helical) occupy residues 12-32, 279-299, 316-336, 359-379, 415-435, and 461-481; these read SLVS…TLVP, MIVS…ALAV, LSTG…VYIV, SYVL…AIWI, MVPL…GATL, and VVGL…LGDI. Positions 280–479 constitute an ABC transmembrane type-1 domain; sequence IVSSAITGLI…CISIFSRLLG (200 aa).

It belongs to the binding-protein-dependent transport system permease family. OppBC subfamily.

The protein localises to the cell membrane. Functionally, part of the binding-protein-dependent transport system for oligopeptides; probably responsible for the translocation of the substrate across the membrane. This Streptococcus pneumoniae serotype 4 (strain ATCC BAA-334 / TIGR4) protein is Oligopeptide transport system permease protein AmiC (amiC).